A 57-amino-acid chain; its full sequence is DNA gyrase inhibitor YacG (57 aa).

Zn(2+)-binding residues include cysteine 10, cysteine 13, cysteine 25, and cysteine 29.

The protein belongs to the DNA gyrase inhibitor YacG family. Interacts with GyrB. The cofactor is Zn(2+).

Inhibits all the catalytic activities of DNA gyrase by preventing its interaction with DNA. Acts by binding directly to the C-terminal domain of GyrB, which probably disrupts DNA binding by the gyrase. This is DNA gyrase inhibitor YacG from Brucella melitensis biotype 1 (strain ATCC 23456 / CCUG 17765 / NCTC 10094 / 16M).